A 152-amino-acid chain; its full sequence is 3-hydroxyacyl-[acyl-carrier-protein] dehydratase FabZ (152 aa).

Residue His-58 is part of the active site.

This sequence belongs to the thioester dehydratase family. FabZ subfamily.

It is found in the cytoplasm. The enzyme catalyses a (3R)-hydroxyacyl-[ACP] = a (2E)-enoyl-[ACP] + H2O. Involved in unsaturated fatty acids biosynthesis. Catalyzes the dehydration of short chain beta-hydroxyacyl-ACPs and long chain saturated and unsaturated beta-hydroxyacyl-ACPs. The polypeptide is 3-hydroxyacyl-[acyl-carrier-protein] dehydratase FabZ (Prochlorococcus marinus (strain MIT 9215)).